Here is a 92-residue protein sequence, read N- to C-terminus: Small integral membrane protein 12 (92 aa).

A helical membrane pass occupies residues 12–34; the sequence is YAPYVTFPVAFVVGAVGYHLEWF.

It belongs to the SMIM12 family.

It localises to the membrane. The protein is Small integral membrane protein 12 (SMIM12) of Bos taurus (Bovine).